The sequence spans 335 residues: tRNA N6-adenosine threonylcarbamoyltransferase (335 aa).

Positions 110 and 114 each coordinate Fe cation. Residues 132–136 (LVSGG), Asp165, Gly178, and Asn271 contribute to the substrate site. A Fe cation-binding site is contributed by Asp299.

The protein belongs to the KAE1 / TsaD family. It depends on Fe(2+) as a cofactor.

The protein resides in the cytoplasm. It catalyses the reaction L-threonylcarbamoyladenylate + adenosine(37) in tRNA = N(6)-L-threonylcarbamoyladenosine(37) in tRNA + AMP + H(+). Its function is as follows. Required for the formation of a threonylcarbamoyl group on adenosine at position 37 (t(6)A37) in tRNAs that read codons beginning with adenine. Is involved in the transfer of the threonylcarbamoyl moiety of threonylcarbamoyl-AMP (TC-AMP) to the N6 group of A37, together with TsaE and TsaB. TsaD likely plays a direct catalytic role in this reaction. In Campylobacter jejuni subsp. doylei (strain ATCC BAA-1458 / RM4099 / 269.97), this protein is tRNA N6-adenosine threonylcarbamoyltransferase.